Here is a 317-residue protein sequence, read N- to C-terminus: Lysosomal-associated transmembrane protein 4B (317 aa).

Positions 25 to 73 (AFGAKGTDPAEARSSRGIEEAGPRAHGRAGREPERRRSRQQRRGGLQAR) are disordered. A compositionally biased stretch (basic and acidic residues) spans 32-59 (DPAEARSSRGIEEAGPRAHGRAGREPER). The next 4 helical transmembrane spans lie at 117-137 (ILLGVWYLIINAVVLLILLSA), 163-183 (MCIAIAISLLMILICAMATYG), 191-211 (WIIPFFCYQIFDFALNMLVAI), and 244-264 (CLVLIILLFISIILTFKGYLI). The interval 205 to 221 (LNMLVAITVLIYPNSIQ) is required for NEDD4 interaction.

It belongs to the LAPTM4/LAPTM5 transporter family. Homooligomer; upon reaching the lysosomes. Interacts with MCOLN1. Interacts with NEDD4; may play a role in the lysosomal sorting of LAPTM4B; enhances HGS association with NEDD4; mediates inhibition of EGFR degradation. Interacts with PIP5K1C; promotes SNX5 association with LAPTM4B; kinase activity of PIP5K1C is required; interaction is regulated by phosphatidylinositol 4,5-bisphosphate generated by PIP5K1C. Interacts with HGS; promotes HGS ubiquitination. Interacts with SNX5. Interacts with SLC3A2 and SLC7A5; recruits SLC3A2 and SLC7A5 to lysosomes to promote leucine uptake into these organelles and is required for mTORC1 activation. Interacts with LRRC32; decreases TGFB1 production in regulatory T cells. Interacts with BECN1; competes with EGFR for LAPTM4B binding; regulates EGFR activity. Interacts with EGFR; positively correlates with EGFR activation. Undergoes proteolytic cleavage following delivery to the lysosomes. In terms of processing, ubiquitinated by NEDD4.

The protein localises to the endomembrane system. The protein resides in the late endosome membrane. It is found in the cell membrane. It localises to the cell projection. Its subcellular location is the lysosome membrane. The protein localises to the endosome membrane. The protein resides in the endosome. It is found in the multivesicular body membrane. It localises to the multivesicular body lumen. Functionally, required for optimal lysosomal function. Blocks EGF-stimulated EGFR intraluminal sorting and degradation. Conversely by binding with the phosphatidylinositol 4,5-bisphosphate, regulates its PIP5K1C interaction, inhibits HGS ubiquitination and relieves LAPTM4B inhibition of EGFR degradation. Recruits SLC3A2 and SLC7A5 (the Leu transporter) to the lysosome, promoting entry of leucine and other essential amino acid (EAA) into the lysosome, stimulating activation of proton-transporting vacuolar (V)-ATPase protein pump (V-ATPase) and hence mTORC1 activation. Plays a role as negative regulator of TGFB1 production in regulatory T cells. Binds ceramide and facilitates its exit from late endosome in order to control cell death pathways. This Homo sapiens (Human) protein is Lysosomal-associated transmembrane protein 4B.